Here is a 30-residue protein sequence, read N- to C-terminus: Circulin A (30 aa).

The segment at residues 1–30 is a cross-link (cyclopeptide (Gly-Asn)); the sequence is GIPCGESCVWIPCISAALGCSCKNKVCYRN. 3 disulfide bridges follow: cysteine 4–cysteine 20, cysteine 8–cysteine 22, and cysteine 13–cysteine 27.

This is a cyclic peptide. As to expression, expressed in fruit, pedicel, root and stem but not in leaf (at protein level).

Its function is as follows. Probably participates in a plant defense mechanism. The protein is Circulin A of Chassalia chartacea (Chassalia curviflora).